A 408-amino-acid chain; its full sequence is Acetate kinase (408 aa).

N7 contributes to the Mg(2+) binding site. K14 is an ATP binding site. Residue R91 coordinates substrate. Residue D148 is the Proton donor/acceptor of the active site. ATP contacts are provided by residues 208–212 (HLGNG), 283–285 (DFR), and 331–335 (GIGEN). E384 lines the Mg(2+) pocket.

Belongs to the acetokinase family. In terms of assembly, homodimer. Mg(2+) is required as a cofactor. The cofactor is Mn(2+).

Its subcellular location is the cytoplasm. The catalysed reaction is acetate + ATP = acetyl phosphate + ADP. The protein operates within metabolic intermediate biosynthesis; acetyl-CoA biosynthesis; acetyl-CoA from acetate: step 1/2. Functionally, catalyzes the formation of acetyl phosphate from acetate and ATP. Can also catalyze the reverse reaction. This chain is Acetate kinase, found in Methanosarcina barkeri (strain Fusaro / DSM 804).